The sequence spans 138 residues: MTTDTQSLPAWLDKVRWDDNGLVPVIAQEAATNDVLMFAWMNREALAKTIETQRAVYYSRSRKRLWFKGEESGHVQHVHEVRLDCDEDVVLLKVEQVSGIACHTGRHSCFFQKFEGTVENGDWVAVEPVLKDPEHIYK.

Mg(2+) is bound at residue Asp-84. Cys-85 provides a ligand contact to Zn(2+). Mg(2+)-binding residues include Asp-86 and Asp-88. The Zn(2+) site is built by Cys-102 and Cys-109.

This sequence belongs to the PRA-CH family. As to quaternary structure, homodimer. It depends on Mg(2+) as a cofactor. The cofactor is Zn(2+).

The protein localises to the cytoplasm. The catalysed reaction is 1-(5-phospho-beta-D-ribosyl)-5'-AMP + H2O = 1-(5-phospho-beta-D-ribosyl)-5-[(5-phospho-beta-D-ribosylamino)methylideneamino]imidazole-4-carboxamide. Its pathway is amino-acid biosynthesis; L-histidine biosynthesis; L-histidine from 5-phospho-alpha-D-ribose 1-diphosphate: step 3/9. Its function is as follows. Catalyzes the hydrolysis of the adenine ring of phosphoribosyl-AMP. The polypeptide is Phosphoribosyl-AMP cyclohydrolase (Burkholderia vietnamiensis (strain G4 / LMG 22486) (Burkholderia cepacia (strain R1808))).